The primary structure comprises 310 residues: tRNA-cytidine(32) 2-sulfurtransferase (310 aa).

Residues 45-50 (SGGKDS) carry the PP-loop motif motif. [4Fe-4S] cluster contacts are provided by Cys-120, Cys-123, and Cys-211.

This sequence belongs to the TtcA family. Homodimer. Requires Mg(2+) as cofactor. It depends on [4Fe-4S] cluster as a cofactor.

Its subcellular location is the cytoplasm. The enzyme catalyses cytidine(32) in tRNA + S-sulfanyl-L-cysteinyl-[cysteine desulfurase] + AH2 + ATP = 2-thiocytidine(32) in tRNA + L-cysteinyl-[cysteine desulfurase] + A + AMP + diphosphate + H(+). Its pathway is tRNA modification. Catalyzes the ATP-dependent 2-thiolation of cytidine in position 32 of tRNA, to form 2-thiocytidine (s(2)C32). The sulfur atoms are provided by the cysteine/cysteine desulfurase (IscS) system. This is tRNA-cytidine(32) 2-sulfurtransferase from Shewanella baltica (strain OS195).